A 349-amino-acid chain; its full sequence is Glycosyltransferase 8 domain-containing protein 2 (349 aa).

Residues Met1–Lys6 are Cytoplasmic-facing. Residues Ile7–Tyr24 form a helical; Signal-anchor for type II membrane protein membrane-spanning segment. Residues Lys25–Ser349 lie on the Lumenal side of the membrane. A glycan (N-linked (GlcNAc...) asparagine) is linked at Asn234.

Belongs to the glycosyltransferase 8 family.

The protein resides in the membrane. This is Glycosyltransferase 8 domain-containing protein 2 (GLT8D2) from Homo sapiens (Human).